Here is a 436-residue protein sequence, read N- to C-terminus: GTPase Der (436 aa).

2 EngA-type G domains span residues 4-167 (PIVA…GEEE) and 176-351 (IRLS…ENHK). GTP-binding positions include 10–17 (GRPNVGKS), 57–61 (DTGGI), 119–122 (NKVD), 182–189 (GRPNVGKS), 229–233 (DTAGM), and 294–297 (NKWD). One can recognise a KH-like domain in the interval 352–436 (KRVQSSTLNE…PIHIIARKRN (85 aa)).

This sequence belongs to the TRAFAC class TrmE-Era-EngA-EngB-Septin-like GTPase superfamily. EngA (Der) GTPase family. As to quaternary structure, associates with the 50S ribosomal subunit.

Functionally, GTPase that plays an essential role in the late steps of ribosome biogenesis. The polypeptide is GTPase Der (Staphylococcus aureus (strain Mu3 / ATCC 700698)).